Consider the following 1148-residue polypeptide: MASAPAEAETRQRLLRTVKKEVKQIMEEAVTRKFVHEDSSHIISFCAAVEACVLHGLRRRAAGFLRSNKIAALFMKVGKNFPPAEDLSRKVQDLEQLIESARNQIQGLQENVRKLPKLPNLSPLAIKHLWIRTALFEKVLDKIVHYLVENSSKYYEKEALLMDPVDGPILASLLVGPCALEYTKMKTADHFWTDPSADELVQRHRIHSSHVRQDSPTKRPALCIQKRHSSGSMDDRPSLSARDYVESLHQNSRATLLYGKNNVLVQPRDDMEAVPGYLSLHQTADVMTLKWTPNQLMNGSVGDLDYEKSVYWDYAMTIRLEEIVYLHCHQQVDSGGTVVLVSQDGIQRPPFRFPKGGHLLQFLSCLENGLLPHGQLDPPLWSQRGKGKVFPKLRKRSPQGSAESTSSDKDDDEATDYVFRIIYPGMQSEFVAPDFLGSTSSVSVGPAWMMVPAGRSMLVVARGSQWEPARWDTTLPTPSPKEQPPMPQDLMDVSVSNLPSLWQPSPRKSSCSSCSQSGSADGSSTNGCNHERAPLKLLCDNMKYQILSRAFYGWLAYCRHLSTVRTHLSALVNHMIVSPDLPCDAGQGLTARIWEQYLHDSTSYEEQELLRLIYYGGIQPEIRKAVWPFLLGHYQFGMTETERKEVDEQIHACYAQTMAEWLGCEAIVRQRERESHAAALAKCSSGASLDSHLHRMLHRDSTISNESSQSCSSGRQNIRLHSDSSSSTQVFESVDEVEQVEAEGRLEEKQPKIPNGNLVNGTCSPDSGHPSSHNFSSGLSEHSEPSLSTEDSVLDAQRNTPTVLRPRDGSVDDRQSSEATTSQDEAPREELAVQDSLESDLLANESMDEFMSITGSLDMALPEKDDVVMEGWRSSETEKHGQADSEDNLSEEPEMESLFPALASLAVTTSANEVSPVSSSGVTYSPELLDLYTVNLHRIEKDVQRCDRNYWYFTPANLEKLRNIMCSYIWQHIEIGYVQGMCDLLAPLLVILDDEALAFSCFTELMKRMNQNFPHGGAMDTHFANMRSLIQILDSELFELMHQNGDYTHFYFCYRWFLLDFKRELVYDDVFLVWETIWAAKHVSSAHYVLFIALALVEVYRDIILENNMDFTDIIKFFNEMAERHNTKQVLKLARDLVYKVQTLIENK.

One can recognise an RUN domain in the interval 36–190; that stretch reads HEDSSHIISF…EYTKMKTADH (155 aa). The tract at residues 256–297 is important for interaction with RAB9A and RAB9B; that stretch reads LLYGKNNVLVQPRDDMEAVPGYLSLHQTADVMTLKWTPNQLM. Residues 301–350 are required for interaction with RAP family members; sequence VGDLDYEKSVYWDYAMTIRLEEIVYLHCHQQVDSGGTVVLVSQDGIQRPP. Disordered stretches follow at residues 377-411, 700-830, and 871-894; these read DPPL…DKDD, DSTI…PREE, and GWRS…EEPE. The segment covering 385-397 has biased composition (basic residues); it reads GKGKVFPKLRKRS. Residues 617 to 1081 enclose the Rab-GAP TBC domain; it reads GIQPEIRKAV…LVWETIWAAK (465 aa). Residues 702–716 are compositionally biased toward polar residues; that stretch reads TISNESSQSCSSGRQ. The span at 742 to 751 shows a compositional bias: basic and acidic residues; sequence AEGRLEEKQP. Residues 757 to 802 are compositionally biased toward polar residues; that stretch reads NLVNGTCSPDSGHPSSHNFSSGLSEHSEPSLSTEDSVLDAQRNTPT. Basic and acidic residues-rich tracts occupy residues 805–816 and 871–883; these read RPRDGSVDDRQS and GWRS…HGQA. The span at 884 to 894 shows a compositional bias: acidic residues; the sequence is DSEDNLSEEPE.

Belongs to the RUTBC family. Interacts with RAB9A (GTP-bound form) and RAB9B (GTP-bound form); has much lower affinity for GDP-bound RAB9A and RAB9B. Interacts with RAB3A, RAB4A, RAB5A, RAB8A, RAB11A, RAP1A, RAP1B, RAP2A and RAP2B. No interaction with RAB27A. As to expression, mainly expressed in brain, heart and testis.

It localises to the golgi apparatus. It is found in the trans-Golgi network. The protein localises to the cytoplasmic vesicle membrane. Its subcellular location is the cytoplasm. Functionally, interacts with numerous Rab family members, functioning as Rab effector for some, and as GTPase activator for others. Promotes GTP hydrolysis by RAB34 and RAB36. Probably functions as a GTPase effector with RAB9A and RAB9B; does not stimulate GTP hydrolysis with RAB9A and RAB9B. The polypeptide is Small G protein signaling modulator 1 (SGSM1) (Homo sapiens (Human)).